Here is a 297-residue protein sequence, read N- to C-terminus: N-acetylneuraminate lyase (297 aa).

2 residues coordinate aceneuramate: Ser47 and Thr48. Tyr137 functions as the Proton donor in the catalytic mechanism. Lys165 (schiff-base intermediate with substrate) is an active-site residue. Aceneuramate contacts are provided by Thr167, Gly189, Asp191, Glu192, and Ser208.

The protein belongs to the DapA family. NanA subfamily. Homotetramer.

It is found in the cytoplasm. The catalysed reaction is aceneuramate = aldehydo-N-acetyl-D-mannosamine + pyruvate. It functions in the pathway amino-sugar metabolism; N-acetylneuraminate degradation; D-fructose 6-phosphate from N-acetylneuraminate: step 1/5. Functionally, catalyzes the reversible aldol cleavage of N-acetylneuraminic acid (sialic acid; Neu5Ac) to form pyruvate and N-acetylmannosamine (ManNAc) via a Schiff base intermediate. In Salmonella paratyphi A (strain AKU_12601), this protein is N-acetylneuraminate lyase.